Reading from the N-terminus, the 503-residue chain is Alpha-1B-glycoprotein (503 aa).

Residues 1–21 (MSAWAALLLLWGLSLSPVTEQ) form the signal peptide. 5 consecutive Ig-like V-type domains span residues 27-115 (PRPS…EVTG), 117-204 (EPLP…TVTI), 208-305 (DPPP…LVLS), 307-405 (GTLP…LRVD), and 406-501 (GPLP…LRVA). Cysteine 49 and cysteine 96 are oxidised to a cystine. 2 N-linked (GlcNAc...) asparagine glycosylation sites follow: asparagine 137 and asparagine 182. Cystine bridges form between cysteine 142/cysteine 185, cysteine 235/cysteine 282, cysteine 333/cysteine 382, and cysteine 431/cysteine 478. The N-linked (GlcNAc...) asparagine glycan is linked to asparagine 379.

Interacts with CRISP3. In terms of tissue distribution, plasma.

Its subcellular location is the secreted. This chain is Alpha-1B-glycoprotein, found in Bos taurus (Bovine).